The chain runs to 344 residues: Methionine import ATP-binding protein MetN (344 aa).

In terms of domain architecture, ABC transporter spans Ile2–Ile241. Position 38-45 (Gly38–Ser45) interacts with ATP.

It belongs to the ABC transporter superfamily. Methionine importer (TC 3.A.1.24) family. In terms of assembly, the complex is composed of two ATP-binding proteins (MetN), two transmembrane proteins (MetI) and a solute-binding protein (MetQ).

It localises to the cell inner membrane. It catalyses the reaction L-methionine(out) + ATP + H2O = L-methionine(in) + ADP + phosphate + H(+). It carries out the reaction D-methionine(out) + ATP + H2O = D-methionine(in) + ADP + phosphate + H(+). Functionally, part of the ABC transporter complex MetNIQ involved in methionine import. Responsible for energy coupling to the transport system. The sequence is that of Methionine import ATP-binding protein MetN from Haemophilus ducreyi (strain 35000HP / ATCC 700724).